Consider the following 139-residue polypeptide: Large ribosomal subunit protein mL54 (139 aa).

Residues 1–50 constitute a mitochondrion transit peptide; it reads MPFIESMAPLSRAITRGISQFSCYSNTLVLRSSRNSSSSLVKRSYVSSRV. Residues 35-50 are compositionally biased toward low complexity; it reads NSSSSLVKRSYVSSRV. A disordered region spans residues 35-74; sequence NSSSSLVKRSYVSSRVSPKKPQHNSDATSSAQKVANKTHT. A compositionally biased stretch (polar residues) spans 58–74; the sequence is NSDATSSAQKVANKTHT.

The protein belongs to the mitochondrion-specific ribosomal protein mL54 family. As to quaternary structure, component of the mitochondrial large ribosomal subunit (mt-LSU). Mature yeast 74S mitochondrial ribosomes consist of a small (37S) and a large (54S) subunit. The 37S small subunit contains a 15S ribosomal RNA (15S mt-rRNA) and at least 32 different proteins. The 54S large subunit contains a 21S rRNA (21S mt-rRNA) and at least 45 different proteins.

The protein resides in the mitochondrion. Functionally, component of the mitochondrial ribosome (mitoribosome), a dedicated translation machinery responsible for the synthesis of mitochondrial genome-encoded proteins, including at least some of the essential transmembrane subunits of the mitochondrial respiratory chain. The mitoribosomes are attached to the mitochondrial inner membrane and translation products are cotranslationally integrated into the membrane. mL54 may have a meiosis-specific role as it accumulates during the middle stage of sporulation. The polypeptide is Large ribosomal subunit protein mL54 (mrpl37) (Schizosaccharomyces pombe (strain 972 / ATCC 24843) (Fission yeast)).